A 362-amino-acid polypeptide reads, in one-letter code: NAD(P)H-quinone oxidoreductase subunit 1, chloroplastic (362 aa).

8 consecutive transmembrane segments (helical) span residues 31 to 51 (WVPLPILSLVIVATLGVLVIV), 99 to 119 (WLFTLGPAVVVIPIFLAYLVV), 132 to 152 (IGIFFWIAISSIAPIGLLMSG), 178 to 198 (LAICVLSVCLLADSLSTVDIV), 206 to 226 (ILTWNIWRQPIGFVAFLIAAL), 268 to 288 (LVSGCFVTVLYLGGWHGPFAI), 303 to 323 (AFLGITWTLLKTFLFLFAAIL), and 336 to 356 (LLDLGWKFLLPVSLGNLLLTA).

The protein belongs to the complex I subunit 1 family. As to quaternary structure, NDH is composed of at least 16 different subunits, 5 of which are encoded in the nucleus.

It is found in the plastid. Its subcellular location is the chloroplast thylakoid membrane. It carries out the reaction a plastoquinone + NADH + (n+1) H(+)(in) = a plastoquinol + NAD(+) + n H(+)(out). The catalysed reaction is a plastoquinone + NADPH + (n+1) H(+)(in) = a plastoquinol + NADP(+) + n H(+)(out). Functionally, NDH shuttles electrons from NAD(P)H:plastoquinone, via FMN and iron-sulfur (Fe-S) centers, to quinones in the photosynthetic chain and possibly in a chloroplast respiratory chain. The immediate electron acceptor for the enzyme in this species is believed to be plastoquinone. Couples the redox reaction to proton translocation, and thus conserves the redox energy in a proton gradient. This chain is NAD(P)H-quinone oxidoreductase subunit 1, chloroplastic, found in Nephroselmis olivacea (Green alga).